The chain runs to 432 residues: uncharacterized protein (432 aa).

Residues 223-432 (ASAVRGEALF…KDLIEYLKTR (210 aa)) form the Cytochrome c domain. Heme c-binding residues include cysteine 236, cysteine 239, and histidine 240.

This is an uncharacterized protein from Sinorhizobium fredii (strain NBRC 101917 / NGR234).